Consider the following 427-residue polypeptide: Inward rectifier potassium channel 2 (427 aa).

The Cytoplasmic portion of the chain corresponds to 1 to 81; the sequence is MGSVRTNRYS…IFTTCVDIRW (81 aa). At Cys-76 the chain carries S-nitrosocysteine. Residues 82–106 traverse the membrane as a helical segment; it reads RWMLVIFCLAFVLSWLFFGCVFWLI. Residues 107-128 are Extracellular-facing; that stretch reads ALLHGDLDASKESKACVSEVNS. The segment at residues 129–140 is an intramembrane region (helical; Pore-forming); that stretch reads FTAAFLFSIETQ. An intramembrane region (pore-forming) is located at residues 141-147; it reads TTIGYGF. The Selectivity filter signature appears at 142 to 147; sequence TIGYGF. Topologically, residues 148–156 are extracellular; sequence RCVTDECPI. Residues 157-178 traverse the membrane as a helical segment; the sequence is AVFMVVFQSIVGCIIDAFIIGA. Residues 179 to 427 lie on the Cytoplasmic side of the membrane; the sequence is VMAKMAKPKK…PRPLRRESEI (249 aa). Residues 181–208 are polyphosphoinositide (PIP2)-binding; the sequence is AKMAKPKKRNETLVFSHNAVIAMRDGKL. A disordered region spans residues 383–427; the sequence is TSKEEEDSENGVPESTSTDSPPGIDLHNQASVPLEPRPLRRESEI. Residues 425–427 carry the PDZ-binding motif; the sequence is SEI.

The protein belongs to the inward rectifier-type potassium channel (TC 1.A.2.1) family. KCNJ2 subfamily. As to quaternary structure, homotetramer. Homomultimeric and heteromultimeric association with KCNJ4/Kir2.3. Can form heteromeric channels with Kir2.6/KCNJ18. Associates, via its PDZ-recognition domain, with a complex containing LIN7A, LIN7B, LIN7C, DLG1, CASK and APBA1. Post-translationally, S-nitrosylation increases the open probability and inward rectifying currents. As to expression, prominently expressed in the central nervous system. Also found in other excitable tissues such as heart and skeletal muscle.

The protein resides in the cell membrane. It localises to the sarcolemma. Its subcellular location is the T-tubule. The enzyme catalyses K(+)(in) = K(+)(out). Activated by phosphatidylinositol 4,5 biphosphate (PtdIns(4,5)P2). In terms of biological role, inward rectifier potassium channels are characterized by a greater tendency to allow potassium to flow into the cell rather than out of it. Their voltage dependence is regulated by the concentration of extracellular potassium; as external potassium is raised, the voltage range of the channel opening shifts to more positive voltages. The inward rectification is mainly due to the blockage of outward current by internal magnesium. Can be blocked by extracellular barium and cesium. Probably participates in establishing action potential waveform and excitability of neuronal and muscle tissues. The polypeptide is Inward rectifier potassium channel 2 (Kcnj2) (Rattus norvegicus (Rat)).